We begin with the raw amino-acid sequence, 227 residues long: 7-cyano-7-deazaguanine synthase (227 aa).

10-20 (LSGGLDSCVAT) serves as a coordination point for ATP. Zn(2+)-binding residues include C193, C201, C204, and C207.

It belongs to the QueC family. It depends on Zn(2+) as a cofactor.

The catalysed reaction is 7-carboxy-7-deazaguanine + NH4(+) + ATP = 7-cyano-7-deazaguanine + ADP + phosphate + H2O + H(+). Its pathway is purine metabolism; 7-cyano-7-deazaguanine biosynthesis. Functionally, catalyzes the ATP-dependent conversion of 7-carboxy-7-deazaguanine (CDG) to 7-cyano-7-deazaguanine (preQ(0)). This is 7-cyano-7-deazaguanine synthase from Methanobrevibacter smithii (strain ATCC 35061 / DSM 861 / OCM 144 / PS).